Reading from the N-terminus, the 414-residue chain is Gamma-glutamyl phosphate reductase (414 aa).

The protein belongs to the gamma-glutamyl phosphate reductase family.

It is found in the cytoplasm. The enzyme catalyses L-glutamate 5-semialdehyde + phosphate + NADP(+) = L-glutamyl 5-phosphate + NADPH + H(+). It participates in amino-acid biosynthesis; L-proline biosynthesis; L-glutamate 5-semialdehyde from L-glutamate: step 2/2. Functionally, catalyzes the NADPH-dependent reduction of L-glutamate 5-phosphate into L-glutamate 5-semialdehyde and phosphate. The product spontaneously undergoes cyclization to form 1-pyrroline-5-carboxylate. This is Gamma-glutamyl phosphate reductase from Clostridium botulinum (strain Alaska E43 / Type E3).